The chain runs to 610 residues: Threonine--tRNA ligase (610 aa).

Residues 1 to 29 are disordered; the sequence is MANHDQQTVSSAAATTSASPSPVVLPKTS. Residues 8-24 show a composition bias toward low complexity; the sequence is TVSSAAATTSASPSPVV. Residues 209-502 form a catalytic region; that stretch reads DHRRIGKDLD…MTENYAGDYP (294 aa). Cys302, His353, and His479 together coordinate Zn(2+).

This sequence belongs to the class-II aminoacyl-tRNA synthetase family. In terms of assembly, homodimer. The cofactor is Zn(2+).

The protein resides in the cytoplasm. The enzyme catalyses tRNA(Thr) + L-threonine + ATP = L-threonyl-tRNA(Thr) + AMP + diphosphate + H(+). Catalyzes the attachment of threonine to tRNA(Thr) in a two-step reaction: L-threonine is first activated by ATP to form Thr-AMP and then transferred to the acceptor end of tRNA(Thr). Also edits incorrectly charged L-seryl-tRNA(Thr). This chain is Threonine--tRNA ligase, found in Synechococcus sp. (strain WH7803).